The chain runs to 1004 residues: Cadmium/zinc-transporting ATPase HMA3 (1004 aa).

Residues 42–108 (KKTYLDVLGV…ALNKAGLEAS (67 aa)) enclose the HMA domain. The next 8 membrane-spanning stretches (helical) occupy residues 120–140 (RWPS…FFEW), 144–164 (PLQC…VRRG), 171–191 (LSLD…CLGD), 193–213 (TEAG…TLAC), 340–360 (CAKY…LIPA), 371–391 (WKLA…LSTP), 683–703 (IAVN…LAAA), and 707–727 (VLWA…LNSM). A disordered region spans residues 931-952 (TGCGASKRSPPAEGSCSGGEGG).

The protein belongs to the cation transport ATPase (P-type) (TC 3.A.3) family. Type IB subfamily. As to expression, specifically expressed in roots.

The protein localises to the vacuole membrane. It carries out the reaction Zn(2+)(in) + ATP + H2O = Zn(2+)(out) + ADP + phosphate + H(+). It catalyses the reaction Cd(2+)(in) + ATP + H2O = Cd(2+)(out) + ADP + phosphate + H(+). In terms of biological role, root-specific cadmium (Cd) transporter that mediates Cd efflux in root vacuoles. Involved in Cd detoxification by sequestrating Cd into root vacuoles and limiting translocation of Cd from the roots to the shoots, and accumulation in grains. The sequence is that of Cadmium/zinc-transporting ATPase HMA3 from Oryza sativa subsp. japonica (Rice).